A 653-amino-acid chain; its full sequence is Fructose-1,6-bisphosphatase class 3 (653 aa).

It belongs to the FBPase class 3 family. It depends on Mn(2+) as a cofactor.

The enzyme catalyses beta-D-fructose 1,6-bisphosphate + H2O = beta-D-fructose 6-phosphate + phosphate. It functions in the pathway carbohydrate biosynthesis; gluconeogenesis. The protein is Fructose-1,6-bisphosphatase class 3 of Listeria innocua serovar 6a (strain ATCC BAA-680 / CLIP 11262).